We begin with the raw amino-acid sequence, 321 residues long: tRNA(Ile)-lysidine synthase (321 aa).

30-35 contributes to the ATP binding site; the sequence is SGGSDS.

Belongs to the tRNA(Ile)-lysidine synthase family.

The protein resides in the cytoplasm. The catalysed reaction is cytidine(34) in tRNA(Ile2) + L-lysine + ATP = lysidine(34) in tRNA(Ile2) + AMP + diphosphate + H(+). In terms of biological role, ligates lysine onto the cytidine present at position 34 of the AUA codon-specific tRNA(Ile) that contains the anticodon CAU, in an ATP-dependent manner. Cytidine is converted to lysidine, thus changing the amino acid specificity of the tRNA from methionine to isoleucine. The chain is tRNA(Ile)-lysidine synthase from Chlamydia trachomatis serovar A (strain ATCC VR-571B / DSM 19440 / HAR-13).